A 295-amino-acid chain; its full sequence is NAD kinase (295 aa).

Asp-73 (proton acceptor) is an active-site residue. NAD(+) contacts are provided by residues 73–74 (DG), Arg-78, 146–147 (NE), Lys-157, Arg-174, Asp-176, and 187–192 (TAYSLS).

The protein belongs to the NAD kinase family. Requires a divalent metal cation as cofactor.

It localises to the cytoplasm. It carries out the reaction NAD(+) + ATP = ADP + NADP(+) + H(+). Functionally, involved in the regulation of the intracellular balance of NAD and NADP, and is a key enzyme in the biosynthesis of NADP. Catalyzes specifically the phosphorylation on 2'-hydroxyl of the adenosine moiety of NAD to yield NADP. The sequence is that of NAD kinase from Wigglesworthia glossinidia brevipalpis.